Here is a 157-residue protein sequence, read N- to C-terminus: F-box protein SNE (157 aa).

Positions 24–70 constitute an F-box domain; sequence PVFSINDHHDVLVEILRRLDGSSLCSAACVCRLWSAVARNDSIWEEL.

In terms of assembly, part of a SCF (ASK-cullin-F-box) protein ligase complex. Interacts directly with SKP1A and SKP1B. As to expression, highly expressed in flowers and at much lower level in seedlings, rosette leaves and green siliques.

It is found in the nucleus. It functions in the pathway protein modification; protein ubiquitination. Essential component of a SCF-type E3 ligase complex that positively regulates the gibberellin signaling pathway. Upon gibberellin treatment, such complex probably mediates the ubiquitination and subsequent degradation of DELLA proteins (GAI, RGA and RGL2), some repressors of the gibberellin pathway, leading to activate the pathway. Can partially complement the absence of GID2/SLY1. The chain is F-box protein SNE (SNE) from Arabidopsis thaliana (Mouse-ear cress).